The chain runs to 587 residues: Solute carrier family 13 member 2 (587 aa).

4 helical membrane-spanning segments follow: residues 13-33 (FYLI…IVQT), 53-73 (ALPL…MGIM), 86-106 (TNIL…WNLH), and 136-156 (SMWI…HAVL). Residues 188–208 (KLDNGQPVSAPSEPRTQKTQE) are disordered. 8 consecutive transmembrane segments (helical) span residues 264-284 (FAFP…QVLF), 329-349 (VLFV…FPGW), 367-387 (TVAI…PGLM), 407-427 (TVND…FALA), 445-465 (PLQH…IAIF), 477-497 (LFLP…LYVM), 506-526 (LAFM…FGGL), and 535-555 (GFLL…SWSI).

Belongs to the SLC13A/DASS transporter (TC 2.A.47) family. NADC subfamily. In terms of tissue distribution, expressed in large and small intestine and in the kidney proximal tubules.

The protein localises to the apical cell membrane. The catalysed reaction is succinate(out) + 3 Na(+)(out) = succinate(in) + 3 Na(+)(in). It carries out the reaction fumarate(out) + 3 Na(+)(out) = fumarate(in) + 3 Na(+)(in). The enzyme catalyses 2-oxoglutarate(out) + 3 Na(+)(out) = 2-oxoglutarate(in) + 3 Na(+)(in). Li(+) decreases succinate transport in the presence of Na(+), by competing at one of the three cation binding sites. Functionally, low-affinity sodium-dicarboxylate cotransporter, that mediates the entry of citric acid cycle intermediates, such as succinate, citrate, fumarate and alpha-ketoglutarate (2-oxoglutarate) into the small intestine and renal proximal tubule. Transports the dicarboxylate into the cell with a probable stoichiometry of 3 Na(+) for 1 divalent dicarboxylate, rendering the process electrogenic. Citrate is transported in protonated form as a divalent anion, rather than the trivalent form which is normally found in blood. Has a critical role in renal dicarboxylate transport. The polypeptide is Solute carrier family 13 member 2 (Slc13a2) (Rattus norvegicus (Rat)).